The sequence spans 143 residues: uncharacterized protein (143 aa).

This sequence belongs to the OsmC/Ohr family.

This is an uncharacterized protein from Acinetobacter baylyi (strain ATCC 33305 / BD413 / ADP1).